Here is a 354-residue protein sequence, read N- to C-terminus: Phospho-N-acetylmuramoyl-pentapeptide-transferase (354 aa).

The next 10 membrane-spanning stretches (helical) occupy residues 27–47 (ATLL…INML), 73–93 (TMGG…WMDV), 97–117 (LVWA…LDDY), 138–158 (FVVA…YVPV), 162–182 (LYVP…VGAG), 193–213 (GLAI…AYLA), 230–250 (AGEL…FLWF), 256–276 (AVFM…VIAV), 282–302 (IVLA…IVQV), and 331–351 (TVVI…LATL).

This sequence belongs to the glycosyltransferase 4 family. MraY subfamily. Mg(2+) is required as a cofactor.

It is found in the cell inner membrane. It catalyses the reaction UDP-N-acetyl-alpha-D-muramoyl-L-alanyl-gamma-D-glutamyl-meso-2,6-diaminopimeloyl-D-alanyl-D-alanine + di-trans,octa-cis-undecaprenyl phosphate = di-trans,octa-cis-undecaprenyl diphospho-N-acetyl-alpha-D-muramoyl-L-alanyl-D-glutamyl-meso-2,6-diaminopimeloyl-D-alanyl-D-alanine + UMP. It functions in the pathway cell wall biogenesis; peptidoglycan biosynthesis. Its function is as follows. Catalyzes the initial step of the lipid cycle reactions in the biosynthesis of the cell wall peptidoglycan: transfers peptidoglycan precursor phospho-MurNAc-pentapeptide from UDP-MurNAc-pentapeptide onto the lipid carrier undecaprenyl phosphate, yielding undecaprenyl-pyrophosphoryl-MurNAc-pentapeptide, known as lipid I. This is Phospho-N-acetylmuramoyl-pentapeptide-transferase from Novosphingobium aromaticivorans (strain ATCC 700278 / DSM 12444 / CCUG 56034 / CIP 105152 / NBRC 16084 / F199).